Here is a 465-residue protein sequence, read N- to C-terminus: GDNF family receptor alpha-1 (465 aa).

An N-terminal signal peptide occupies residues M1–G24. A run of 3 repeats spans residues D25–N113, K150–R238, and E239–I342. A disulfide bridge connects residues C36 and C42. N-linked (GlcNAc...) asparagine glycosylation occurs at N59. 10 cysteine pairs are disulfide-bonded: C154/C214, C161/C167, C178/C192, C187/C233, C216/C221, C243/C313, C250/C256, C267/C285, C277/C337, and C315/C325. N-linked (GlcNAc...) asparagine glycosylation is found at N347 and N406. The GPI-anchor amidated serine moiety is linked to residue S429. Positions H430 to S465 are cleaved as a propeptide — removed in mature form.

It belongs to the GDNFR family. In terms of assembly, interacts with GDNF ligand and RET: forms a 2:2:2 ternary complex composed of GDNF ligand, GFRA1 and RET receptor. Interacts with SORL1, either alone or in complex with GDNF. Interaction between SORL1 and GFRA1 leads to GFRA1 internalization, but not degradation.

It is found in the cell membrane. The protein resides in the golgi apparatus. It localises to the trans-Golgi network. Its subcellular location is the endosome. The protein localises to the multivesicular body. In terms of biological role, coreceptor for GDNF, a neurotrophic factor that enhances survival and morphological differentiation of dopaminergic neurons and increases their high-affinity dopamine uptake. GDNF-binding leads to autophosphorylation and activation of the RET receptor. The chain is GDNF family receptor alpha-1 (GFRA1) from Homo sapiens (Human).